A 200-amino-acid polypeptide reads, in one-letter code: Glycosyl hydrolase family 19 domain-containing protein HI_1415 (200 aa).

The protein belongs to the glycosyl hydrolase 19 family.

The polypeptide is Glycosyl hydrolase family 19 domain-containing protein HI_1415 (Haemophilus influenzae (strain ATCC 51907 / DSM 11121 / KW20 / Rd)).